Consider the following 554-residue polypeptide: Methyl-coenzyme M reductase II subunit alpha (554 aa).

Glutamine 151 is a coenzyme F430 binding site. Residues arginine 229, lysine 260–histidine 261, and arginine 274 contribute to the coenzyme B site. Coenzyme M contacts are provided by tyrosine 336 and tyrosine 447.

The protein belongs to the methyl-coenzyme M reductase alpha subunit family. As to quaternary structure, MCR is a hexamer of two alpha, two beta, and two gamma chains, forming a dimer of heterotrimers. It depends on coenzyme F430 as a cofactor.

It catalyses the reaction coenzyme B + methyl-coenzyme M = methane + coenzyme M-coenzyme B heterodisulfide. It functions in the pathway one-carbon metabolism; methyl-coenzyme M reduction; methane from methyl-coenzyme M: step 1/1. Component of the methyl-coenzyme M reductase (MCR) I that catalyzes the reductive cleavage of methyl-coenzyme M (CoM-S-CH3 or 2-(methylthio)ethanesulfonate) using coenzyme B (CoB or 7-mercaptoheptanoylthreonine phosphate) as reductant which results in the production of methane and the mixed heterodisulfide of CoB and CoM (CoM-S-S-CoB). This is the final step in methanogenesis. The polypeptide is Methyl-coenzyme M reductase II subunit alpha (mrtA) (Methanothermus fervidus (strain ATCC 43054 / DSM 2088 / JCM 10308 / V24 S)).